A 268-amino-acid chain; its full sequence is 4-hydroxy-tetrahydrodipicolinate reductase (268 aa).

NAD(+)-binding positions include 8-13 (GACGKM), D34, 95-97 (GTT), and 121-124 (APNF). The Proton donor/acceptor role is filled by H151. H152 is a (S)-2,3,4,5-tetrahydrodipicolinate binding site. The active-site Proton donor is K155. A (S)-2,3,4,5-tetrahydrodipicolinate-binding site is contributed by 161–162 (GT).

The protein belongs to the DapB family.

Its subcellular location is the cytoplasm. The enzyme catalyses (S)-2,3,4,5-tetrahydrodipicolinate + NAD(+) + H2O = (2S,4S)-4-hydroxy-2,3,4,5-tetrahydrodipicolinate + NADH + H(+). It carries out the reaction (S)-2,3,4,5-tetrahydrodipicolinate + NADP(+) + H2O = (2S,4S)-4-hydroxy-2,3,4,5-tetrahydrodipicolinate + NADPH + H(+). The protein operates within amino-acid biosynthesis; L-lysine biosynthesis via DAP pathway; (S)-tetrahydrodipicolinate from L-aspartate: step 4/4. Functionally, catalyzes the conversion of 4-hydroxy-tetrahydrodipicolinate (HTPA) to tetrahydrodipicolinate. In Dictyoglomus turgidum (strain DSM 6724 / Z-1310), this protein is 4-hydroxy-tetrahydrodipicolinate reductase.